Consider the following 272-residue polypeptide: Proteasome subunit beta type-5 (272 aa).

Residues 1-55 constitute a propeptide, removed in mature form; that stretch reads MKLDTSGLESTAPIFRRSDFVFDGLQMTPSFDLPNPTDFDGFQKEAVQMVKPAKG. Catalysis depends on Thr56, which acts as the Nucleophile.

The protein belongs to the peptidase T1B family. As to quaternary structure, the 26S proteasome consists of a 20S proteasome core and two 19S regulatory subunits. The 20S proteasome core is composed of 28 subunits that are arranged in four stacked rings, resulting in a barrel-shaped structure. The two end rings are each formed by seven alpha subunits, and the two central rings are each formed by seven beta subunits. The catalytic chamber with the active sites is on the inside of the barrel.

It localises to the cytoplasm. The protein resides in the nucleus. It catalyses the reaction Cleavage of peptide bonds with very broad specificity.. Functionally, the proteasome is a multicatalytic proteinase complex which is characterized by its ability to cleave peptides with Arg, Phe, Tyr, Leu, and Glu adjacent to the leaving group at neutral or slightly basic pH. The proteasome has an ATP-dependent proteolytic activity. The polypeptide is Proteasome subunit beta type-5 (Spinacia oleracea (Spinach)).